The chain runs to 432 residues: Peptidyl-prolyl cis-trans isomerase cyp6 (432 aa).

The PPIase cyclophilin-type domain maps to 1-168 (MSVLIETTVG…RDIRIKHTII (168 aa)). Serine 206 carries the phosphoserine modification. One can recognise an RRM domain in the interval 244–322 (NVLFVCKLNP…SRIHVDFSQS (79 aa)). The segment at 330–432 (YNSNRDRKRS…DRRYRDDRYR (103 aa)) is disordered. 3 stretches are compositionally biased toward basic and acidic residues: residues 341-366 (SRSDDREYHRRSDGRYDRSNYRDDYR), 373-395 (DHRDDQSSFRNERFSNYYGDDRS), and 406-432 (NCDDHLRDKSPERRYRYDRRYRDDRYR).

It belongs to the cyclophilin-type PPIase family. PPIL4 subfamily.

The protein localises to the nucleus. The enzyme catalyses [protein]-peptidylproline (omega=180) = [protein]-peptidylproline (omega=0). Its function is as follows. PPIases accelerate the folding of proteins. It catalyzes the cis-trans isomerization of proline imidic peptide bonds in oligopeptides. This chain is Peptidyl-prolyl cis-trans isomerase cyp6 (cyp6), found in Schizosaccharomyces pombe (strain 972 / ATCC 24843) (Fission yeast).